The following is a 173-amino-acid chain: Ribulose bisphosphate carboxylase small subunit, chloroplastic 1 (173 aa).

The N-terminal 52 residues, 1-52 (MMVSTAAVARVRPAQTNMVGAFNGCRSSVAFPATRKANNDLSTLPSSGGRVS), are a transit peptide targeting the chloroplast.

The protein belongs to the RuBisCO small chain family. As to quaternary structure, heterohexadecamer of 8 large and 8 small subunits.

It is found in the plastid. The protein localises to the chloroplast. Its function is as follows. RuBisCO catalyzes two reactions: the carboxylation of D-ribulose 1,5-bisphosphate, the primary event in carbon dioxide fixation, as well as the oxidative fragmentation of the pentose substrate. Both reactions occur simultaneously and in competition at the same active site. Although the small subunit is not catalytic it is essential for maximal activity. The polypeptide is Ribulose bisphosphate carboxylase small subunit, chloroplastic 1 (Lemna gibba (Swollen duckweed)).